A 316-amino-acid polypeptide reads, in one-letter code: Homoserine kinase (316 aa).

Residue 96–106 participates in ATP binding; the sequence is PHGRGLGSSGA.

It belongs to the GHMP kinase family. Homoserine kinase subfamily.

The protein localises to the cytoplasm. It catalyses the reaction L-homoserine + ATP = O-phospho-L-homoserine + ADP + H(+). It functions in the pathway amino-acid biosynthesis; L-threonine biosynthesis; L-threonine from L-aspartate: step 4/5. In terms of biological role, catalyzes the ATP-dependent phosphorylation of L-homoserine to L-homoserine phosphate. The chain is Homoserine kinase from Clavibacter michiganensis subsp. michiganensis (strain NCPPB 382).